A 475-amino-acid polypeptide reads, in one-letter code: C3a anaphylatoxin chemotactic receptor (475 aa).

Residues 1–23 (MESSSAETNSTGLHLEPQYQPET) are Extracellular-facing. A glycan (N-linked (GlcNAc...) asparagine) is linked at Asn-9. A helical membrane pass occupies residues 24-46 (ILAMAILGLTFVLGLPGNGLVLW). The Cytoplasmic portion of the chain corresponds to 47-57 (VAGLKMRRTVN). A helical transmembrane segment spans residues 58-80 (TVWFLHLTVADFVCCLSLPFSMA). At 81–96 (HLALRGYWPYGEILCK) the chain is on the extracellular side. Cys-95 and Cys-172 are joined by a disulfide. Residues 97 to 118 (FIPTVIIFNMFASVFLLTAISL) form a helical membrane-spanning segment. The Cytoplasmic segment spans residues 119–139 (DRCLMVLKPIWCQNHRNVRTA). The chain crosses the membrane as a helical span at residues 140–160 (CIICGCIWLVAFVLCIPVFVY). The Extracellular portion of the chain corresponds to 161 to 331 (RETFTLENHT…RLLKVITFTR (171 aa)). An N-linked (GlcNAc...) asparagine glycan is attached at Asn-168. Tyr-174 and Tyr-183 each carry sulfotyrosine. Residues Asn-273 and Asn-292 are each glycosylated (N-linked (GlcNAc...) asparagine). The chain crosses the membrane as a helical span at residues 332 to 351 (LVVGFLLPMIIMVACYTLII). At 352–368 (FRMRRVRVVKSWNKALH) the chain is on the cytoplasmic side. Residues 369–391 (LAMVVVTIFLICWAPYHVFGVLI) form a helical membrane-spanning segment. Residues 392–408 (LFINPESRVGAALLSWD) lie on the Extracellular side of the membrane. A helical membrane pass occupies residues 409-429 (HVSIALASANSCFNPFLYALL). Residues 430 to 475 (GRDLRKRVRQSMKGILEAAFSEDISKSTSFIQAKAFSEKHSLSTNV) lie on the Cytoplasmic side of the membrane. Residue Ser-450 is modified to Phosphoserine.

The protein belongs to the G-protein coupled receptor 1 family. Interacts with VGF-derived peptide TLQP-21. As to expression, expressed in the heart, kidney, lung, liver, peritoneal macrophages and spleen.

It is found in the cell membrane. Functionally, receptor for the chemotactic and inflammatory peptide anaphylatoxin C3a. This receptor stimulates chemotaxis, granule enzyme release and superoxide anion production. The protein is C3a anaphylatoxin chemotactic receptor (C3AR1) of Cavia porcellus (Guinea pig).